Consider the following 98-residue polypeptide: NADH-ubiquinone oxidoreductase chain 4L (98 aa).

3 helical membrane passes run P2–F22, M37–F57, and I61–V81.

This sequence belongs to the complex I subunit 4L family. In terms of assembly, core subunit of respiratory chain NADH dehydrogenase (Complex I) which is composed of 45 different subunits.

Its subcellular location is the mitochondrion inner membrane. The catalysed reaction is a ubiquinone + NADH + 5 H(+)(in) = a ubiquinol + NAD(+) + 4 H(+)(out). Functionally, core subunit of the mitochondrial membrane respiratory chain NADH dehydrogenase (Complex I) which catalyzes electron transfer from NADH through the respiratory chain, using ubiquinone as an electron acceptor. Part of the enzyme membrane arm which is embedded in the lipid bilayer and involved in proton translocation. The chain is NADH-ubiquinone oxidoreductase chain 4L (MT-ND4L) from Varecia rubra (Red ruffed lemur).